Here is a 62-residue protein sequence, read N- to C-terminus: Small ribosomal subunit protein eS27 (62 aa).

The Zn(2+) site is built by C17, C20, C36, and C39. Residues 17-39 (CPECNNEQIVFGSPATVVKCLTC) form a C4-type zinc finger.

The protein belongs to the eukaryotic ribosomal protein eS27 family. Part of the 30S ribosomal subunit. Requires Zn(2+) as cofactor.

The sequence is that of Small ribosomal subunit protein eS27 from Methanocaldococcus jannaschii (strain ATCC 43067 / DSM 2661 / JAL-1 / JCM 10045 / NBRC 100440) (Methanococcus jannaschii).